An 870-amino-acid chain; its full sequence is Leucine--tRNA ligase (870 aa).

The short motif at Pro-42–His-52 is the 'HIGH' region element. The 'KMSKS' region signature appears at Lys-629 to Ser-633. Lys-632 contributes to the ATP binding site.

It belongs to the class-I aminoacyl-tRNA synthetase family.

The protein localises to the cytoplasm. The catalysed reaction is tRNA(Leu) + L-leucine + ATP = L-leucyl-tRNA(Leu) + AMP + diphosphate. The chain is Leucine--tRNA ligase from Ectopseudomonas mendocina (strain ymp) (Pseudomonas mendocina).